The following is a 155-amino-acid chain: Eosinophil cationic protein (155 aa).

Positions 1 to 25 (MGLKLLESRLCLLLSLGLVLMLASC) are cleaved as a signal peptide. H38 functions as the Proton acceptor in the catalytic mechanism. 4 cysteine pairs are disulfide-bonded: C47/C106, C61/C118, C79/C133, and C86/C94. Position 62–66 (62–66 (KDINT)) interacts with substrate. N88 and N107 each carry an N-linked (GlcNAc...) asparagine glycan. H150 acts as the Proton donor in catalysis.

It belongs to the pancreatic ribonuclease family.

The protein resides in the cytoplasmic granule. Functionally, cytotoxin and helminthotoxin with ribonuclease activity. Possesses a wide variety of biological activities. The polypeptide is Eosinophil cationic protein (Rnase3) (Rattus norvegicus (Rat)).